The sequence spans 457 residues: Adenylosuccinate synthetase isozyme 2 (457 aa).

Residues 40–46 (GDEGKGK) and 68–70 (GHT) each bind GTP. Catalysis depends on Asp41, which acts as the Proton acceptor. Mg(2+)-binding residues include Asp41 and Gly68. Residue Asp41 participates in substrate binding. Residues 41–44 (DEGK), 66–69 (NAGH), Thr163, Arg177, Asn256, Thr271, and Arg335 each bind IMP. His69 functions as the Proton donor in the catalytic mechanism. Residue 331-337 (VTTGRKR) coordinates substrate. Residues Arg337, 363-365 (KLD), and 445-448 (GVGK) each bind GTP.

The protein belongs to the adenylosuccinate synthetase family. Homodimer. Mg(2+) serves as cofactor.

It localises to the cytoplasm. The protein resides in the mitochondrion. It catalyses the reaction IMP + L-aspartate + GTP = N(6)-(1,2-dicarboxyethyl)-AMP + GDP + phosphate + 2 H(+). Its pathway is purine metabolism; AMP biosynthesis via de novo pathway; AMP from IMP: step 1/2. With respect to regulation, inhibited competitively by AMP and IMP and non-competitively by fructose 1,6-bisphosphate. Plays an important role in the de novo pathway and in the salvage pathway of purine nucleotide biosynthesis. Catalyzes the first committed step in the biosynthesis of AMP from IMP. The protein is Adenylosuccinate synthetase isozyme 2 (adss2) of Xenopus laevis (African clawed frog).